We begin with the raw amino-acid sequence, 303 residues long: Acetyltransferase ataH (303 aa).

Residues 1-23 form the signal peptide; that stretch reads MPTTAAFLRALYILTTLRGIGTS. The next 3 helical transmembrane spans lie at 42–62, 194–214, and 257–277; these read FLLH…MMTF, LVFA…GIML, and GYIW…FPLF.

This sequence belongs to the wax synthase family.

The protein localises to the membrane. It participates in mycotoxin biosynthesis. In terms of biological role, acetyltransferase; part of the gene cluster that mediates the biosynthesis of acetylaranotin, a member of the epipolythiodioxopiperazine (ETP) class of toxins characterized by a disulfide-bridged cyclic dipeptide. The first step of acetylaranotin biosynthesis is performed by the NRPS ataP which produces diketopiperazine cyclo-L-Phe-L-Phe via the condensation of 2 phenylalanines (L-Phe). The ataC domain of ataTC then catalyzes the formation of bishydroxylation of cyclo-L-Phe-L-Phe. The glutathione S-transferase domain ataG in ataIMG further catalyzes the conjugation of two glutathiones to the bishydroxylated intermediate. Next, the dipeptidase ataJ removes the Glu residues. The following step is performed by the carbon sulfur lyase domain ataI of ataIMG which may convert the bis-cysteinyl adduct to yield an epidithiol intermediate. The ataT domain from ataTC then catalyzes the oxidation of the free dithiols, followed by a cyclization step catalyzed by the cytochrome P450 ataF. AtaF probably acts as an epoxidase to promote a dual epoxidation formation at C8 and C9 along with C8' and C9', followed by the spontaneous nucleophilic attack of the amide nitrogens N10 and N10' to yield an intermediate with the pyrrolidine partial structure. The final steps of acetylaranotin biosynthesis involve the acetylation and ring rearrangement of an epitetrathiodiketopiperazine intermediate to produce acetylaranotin. AtaH probably catalyzes the acetylation of epitetrathiodiketopiperazine to produce a diacetate and ataY is responsible for the formation of the dihydrooxepin moiety that converts the diacetate intermediate to acetylaranotin via acetylapoaranotin. Both enzymes could function independently in the absence of the other. The acetylaranotin bis-thiomethyltransferase ataS located outside of acetylaranotin gene cluster is the main thiomethyltransferase responsible for converting acetylaranotin and its related intermediates to their methylated forms. The chain is Acetyltransferase ataH from Aspergillus terreus (strain NIH 2624 / FGSC A1156).